A 764-amino-acid chain; its full sequence is 5-methyltetrahydropteroyltriglutamate--homocysteine methyltransferase (764 aa).

Residues 16-19 and Lys-112 each bind 5-methyltetrahydropteroyltri-L-glutamate; that span reads RELK. L-homocysteine contacts are provided by residues 431-433 and Glu-484; that span reads IGS. L-methionine contacts are provided by residues 431–433 and Glu-484; that span reads IGS. 5-methyltetrahydropteroyltri-L-glutamate is bound by residues 515–516 and Trp-561; that span reads RC. Residue Asp-599 participates in L-homocysteine binding. Asp-599 serves as a coordination point for L-methionine. Glu-605 contributes to the 5-methyltetrahydropteroyltri-L-glutamate binding site. Zn(2+)-binding residues include His-641, Cys-643, and Glu-665. His-694 serves as the catalytic Proton donor. Cys-726 contributes to the Zn(2+) binding site.

The protein belongs to the vitamin-B12 independent methionine synthase family. Zn(2+) serves as cofactor.

The enzyme catalyses 5-methyltetrahydropteroyltri-L-glutamate + L-homocysteine = tetrahydropteroyltri-L-glutamate + L-methionine. Its pathway is amino-acid biosynthesis; L-methionine biosynthesis via de novo pathway; L-methionine from L-homocysteine (MetE route): step 1/1. Functionally, catalyzes the transfer of a methyl group from 5-methyltetrahydrofolate to homocysteine resulting in methionine formation. The chain is 5-methyltetrahydropteroyltriglutamate--homocysteine methyltransferase from Paraburkholderia phytofirmans (strain DSM 17436 / LMG 22146 / PsJN) (Burkholderia phytofirmans).